The primary structure comprises 874 residues: MKSSEIRQKFLQFFQSKGHTIVPSSSLVPANDPTLLFTNSGMVQFKDVFTGKEARAYKRATSSQRSVRAGGKHNDLENVGYTARHHTFFEMLGNFSFGDYFKREAIQYAWELLTQVYRLPAEKLWVTVYQEDDEAYDIWAKEVGVPAERIIRIGDNKGARYASDNFWQMADTGPCGPCSEIFYDHGPEIWGGPPGSPEEDGDRYIEIWNLVFMQFERDAAGNMERLPKPCVDTGMGLERIAAVLQHVHSNYEIDLFQKLIAAAARETGVKDLADNSLKVIADHIRACAFLIVDGIIPSNEGRGYVLRRIVRRALRHGYKLGQTKPFFHRLVPDLVAEMGEAYPELAQVAERVAQVLRQEEERFGETLEHGMKILDGALAKVAKGDPLDGTTLFTLYDTYGFPVDLTADICRERGVEVDMAGFEAAMQRQREQARAAGKFKMAEGLSYEGAETRFEGYESLELSGVKVTALYVEGTQVEQVSAGQDAVVVLDATPFYAESGGQVGDTGLLEAGGVRFAVADTLKIQPGVFGHHGTLEAGALKVGDTLLARVDAVRRARTVRNHSATHLMHKALREVLGAHVQQRGSLVDPDKTRFDFAHDAPMTAEQIARVEAIVNAEVLANQATEAKVMAYDDAVKGGAMALFGEKYGDTVRVLDIGFSRELCGGTHVRRTGDIGLFKVVSEGGVAAGVRRIEAITGDNALAWVQDQNALLQRAAGVLRAPAHELPERIVQVQEQLKALEKELEQARTKLAASAGNDLAATATVEVKGIKVLAASIGDVDPKALRGMVDNLKDRLKPAVVLLAAGSADGKISLVGGVTADLTGRIKAGDLVGFVAGQVGGKGGGRPDMAMGGGTDLAALPAAVASVQKWVDERL.

His-562, His-566, Cys-663, and His-667 together coordinate Zn(2+).

This sequence belongs to the class-II aminoacyl-tRNA synthetase family. It depends on Zn(2+) as a cofactor.

It is found in the cytoplasm. It carries out the reaction tRNA(Ala) + L-alanine + ATP = L-alanyl-tRNA(Ala) + AMP + diphosphate. In terms of biological role, catalyzes the attachment of alanine to tRNA(Ala) in a two-step reaction: alanine is first activated by ATP to form Ala-AMP and then transferred to the acceptor end of tRNA(Ala). Also edits incorrectly charged Ser-tRNA(Ala) and Gly-tRNA(Ala) via its editing domain. This Bordetella bronchiseptica (strain ATCC BAA-588 / NCTC 13252 / RB50) (Alcaligenes bronchisepticus) protein is Alanine--tRNA ligase.